Here is a 900-residue protein sequence, read N- to C-terminus: Nitrate reductase [NADH] (900 aa).

C172 contributes to the Mo-molybdopterin binding site. Positions 521 to 596 (TKMYSLSEVK…LEDYRVGELI (76 aa)) constitute a Cytochrome b5 heme-binding domain. Residues H556 and H579 each contribute to the heme site. Residues 644–756 (REKIPCKLIS…KGPLGHIEYT (113 aa)) enclose the FAD-binding FR-type domain. Residues 696–699 (RAYT), 713–717 (VVKVY), F718, F725, 730–732 (AMS), and T783 contribute to the FAD site.

It belongs to the nitrate reductase family. As to quaternary structure, homodimer. It depends on FAD as a cofactor. Heme is required as a cofactor. The cofactor is Mo-molybdopterin.

It catalyses the reaction nitrite + NAD(+) + H2O = nitrate + NADH + H(+). Nitrate reductase is a key enzyme involved in the first step of nitrate assimilation in plants, fungi and bacteria. This Lotus japonicus (Lotus corniculatus var. japonicus) protein is Nitrate reductase [NADH] (NIA).